A 315-amino-acid chain; its full sequence is piRNA biogenesis protein EXD1 (315 aa).

Residues 141–228 (IYIFDIQVMQ…ECLTNYLGLQ (88 aa)) form the 3'-5' exonuclease domain.

This sequence belongs to the EXD1 family. Homodimer. Component of the PET complex, at least composed of EXD1, SIWI, TDRD12 and piRNAs.

It is found in the cytoplasm. Functionally, RNA-binding component of the PET complex, a multiprotein complex required for the processing of piRNAs during spermatogenesis. The piRNA metabolic process mediates the repression of transposable elements during meiosis by forming complexes composed of piRNAs and Piwi proteins and governs the methylation and subsequent repression of transposable elements, preventing their mobilization, which is essential for the germline integrity. The PET complex is required during the secondary piRNAs metabolic process for the PIWIL2 slicing-triggered loading of PIWIL4 piRNAs. In the PET complex, EXD1 probably acts as an RNA adapter. EXD1 is an inactive exonuclease. The sequence is that of piRNA biogenesis protein EXD1 from Bombyx mori (Silk moth).